A 469-amino-acid polypeptide reads, in one-letter code: Argininosuccinate lyase (469 aa).

It belongs to the lyase 1 family. Argininosuccinate lyase subfamily.

It is found in the cytoplasm. It catalyses the reaction 2-(N(omega)-L-arginino)succinate = fumarate + L-arginine. It participates in amino-acid biosynthesis; L-arginine biosynthesis; L-arginine from L-ornithine and carbamoyl phosphate: step 3/3. This is Argininosuccinate lyase from Burkholderia vietnamiensis (strain G4 / LMG 22486) (Burkholderia cepacia (strain R1808)).